An 883-amino-acid polypeptide reads, in one-letter code: Translation initiation factor IF-2 (883 aa).

Residues Met1–Thr259 form a disordered region. Composition is skewed to low complexity over residues Lys10–Lys22 and Pro77–Ser89. A compositionally biased stretch (basic and acidic residues) spans Ala113–Ala184. A compositionally biased stretch (low complexity) spans Glu185 to Glu218. The segment covering Pro235 to Gln244 has biased composition (pro residues). A tr-type G domain is found at Pro379–Glu548. A G1 region spans residues Gly388–Thr395. Position 388–395 (Gly388–Thr395) interacts with GTP. The segment at Gly413–His417 is G2. The segment at Asp436–Gly439 is G3. Residues Asp436 to His440 and Asn490 to Asp493 each bind GTP. Positions Asn490–Asp493 are G4. The segment at Ser526–Lys528 is G5.

This sequence belongs to the TRAFAC class translation factor GTPase superfamily. Classic translation factor GTPase family. IF-2 subfamily.

Its subcellular location is the cytoplasm. In terms of biological role, one of the essential components for the initiation of protein synthesis. Protects formylmethionyl-tRNA from spontaneous hydrolysis and promotes its binding to the 30S ribosomal subunits. Also involved in the hydrolysis of GTP during the formation of the 70S ribosomal complex. This chain is Translation initiation factor IF-2, found in Rhodopseudomonas palustris (strain ATCC BAA-98 / CGA009).